The sequence spans 1881 residues: Ankyrin-1 (1881 aa).

Residues 1 to 827 are 89 kDa domain; it reads MPYSVGFREA…EDEGEELISF (827 aa). ANK repeat units lie at residues 44-73, 77-106, 110-139, 143-172, 174-201, 205-234, 238-267, 271-300, 304-333, 337-366, 370-399, 403-432, 436-465, 469-498, 502-531, 535-564, 568-597, 601-630, 634-663, 667-696, 700-729, 733-762, and 766-795; these read NGLNGLHLASKEGHVKMVVELLHKEIILET, KGNTALHIAALAGQDEVVRELVNYGANVNA, KGFTPLYMAAQENHLEVVKFLLENGANQNV, DGFTPLAVALQQGHENVVAHLINYGTKGKV, LPALHIAARNDDTRTAAVLLQNDPNPDV, TGFTPLHIAAHYENLNVAQLLLNRGASVNF, NGITPLHIASRRGNVIMVRLLLDRGAQIET, DELTPLHCAARNGHVRISEILLDHGAPIQA, NGLSPIHMAAQGDHLDCVRLLLQYDAEIDD, DHLTPLHVAAHCGHHRVAKVLLDKGAKPNS, NGFTPLHIACKKNHVRVMELLLKTGASIDA, SGLTPLHVASFMGHLPIVKNLLQRGASPNV, KVETPLHMAARAGHTEVAKYLLQNKAKVNA, DDQTPLHCAARIGHTNMVKLLLENNANPNL, AGHTPLHIAAREGHVETVLALLEKEASQAC, KGFTPLHVAAKYGKVRVAELLLERDAHPNA, NGLTPLHVAVHHNNLDIVKLLLPRGGSPHS, NGYTPLHIAAKQNQVEVARSLLQYGGSANA, QGVTPLHLAAQEGHAEMVALLLSKQANGNL, SGLTPLHLVAQEGHVPVADVLIKHGVMVDA, MGYTPLHVASHYGNIKLVKFLLQHQADVNA, LGYSPLHQAAQQGHTDIVTLLLKNGASPNE, and DGTTPLAIAKRLGYISVTDVLKVVTDETSF. Position 105 is a (3S)-3-hydroxyasparagine; by HIF1AN; partial (asparagine 105). Asparagine 233 is subject to (3S)-3-hydroxyasparagine; by HIF1AN; partial. Serine 429 bears the Phosphoserine mark. Asparagine 431 and asparagine 464 each carry (3S)-3-hydroxyasparagine; by HIF1AN; partial. Asparagine 629 and asparagine 662 each carry (3S)-3-hydroxyasparagine; by HIF1AN; partial. The residue at position 695 (aspartate 695) is a (3S)-3-hydroxyaspartate; by HIF1AN; partial. Asparagine 728 carries the (3S)-3-hydroxyasparagine; by HIF1AN; partial modification. Residue serine 759 is modified to Phosphoserine. Asparagine 761 carries the post-translational modification (3S)-3-hydroxyasparagine; by HIF1AN; partial. A phosphoserine mark is found at serine 781, serine 817, serine 834, and serine 856. Positions 875–904 are disordered; the sequence is EEQEQASKEYDEDSLIPSSPATETSDNISP. The span at 890 to 904 shows a compositional bias: polar residues; the sequence is IPSSPATETSDNISP. 2 consecutive ZU5 domains span residues 913 to 1068 and 1070 to 1216; these read FLVS…IMSR and CQDY…LSDC. Residue threonine 961 is modified to Phosphothreonine. At tyrosine 1073 the chain carries Phosphotyrosine. Serine 1082 is subject to Phosphoserine. The interval 1234 to 1362 is UPA domain; sequence TAVPYMAKFV…QHILCHLNIT (129 aa). Residues threonine 1378 and threonine 1380 each carry the phosphothreonine modification. The tract at residues 1383 to 1881 is 55 kDa regulatory domain; it reads ALRYSILSES…SKDHTSTPNP (499 aa). 3 positions are modified to phosphoserine: serine 1390, serine 1392, and serine 1396. Position 1400 is a phosphothreonine (threonine 1400). The region spanning 1403 to 1487 is the Death domain; that stretch reads AEMKMAVISE…EIVNMLEGSG (85 aa). A phosphoserine mark is found at serine 1428 and serine 1486. A disordered region spans residues 1486-1510; it reads SGRQSRNLKPDRRHTDRDYSLSPSQ. The span at 1493 to 1504 shows a compositional bias: basic and acidic residues; it reads LKPDRRHTDRDY. Serine 1523 and serine 1533 each carry phosphoserine. The interval 1583-1613 is disordered; that stretch reads SSLECSKAEDSDATGHEWKLEGALSEEPRGP. A compositionally biased stretch (basic and acidic residues) spans 1588-1612; it reads SKAEDSDATGHEWKLEGALSEEPRG. Phosphoserine is present on serine 1617. Disordered regions lie at residues 1637–1703, 1718–1791, and 1840–1859; these read LLEQ…LQDW, QGSW…EAKN, and ADAAQEHEEVTVEGPLEDPS. Residues 1642 to 1658 are compositionally biased toward basic and acidic residues; it reads EGQRSEEKLPGSKRQDD. Serine 1666, serine 1671, serine 1686, serine 1690, and serine 1696 each carry phosphoserine. A compositionally biased stretch (polar residues) spans 1683–1694; the sequence is ITHSPTVSQVTE. 2 stretches are compositionally biased toward polar residues: residues 1718–1739 and 1758–1771; these read QGSWQEEVTQGPHSFQGTSTMT and SEHTWTEQPEAESS. Over residues 1772–1781 the composition is skewed to basic and acidic residues; sequence QADRDRRQQG.

In terms of assembly, component of the ankyrin-1 complex in the erythrocyte, composed of ANK1, RHCE, RHAG, SLC4A1, EPB42, GYPA, GYPB and AQP1. Interacts with a number of integral membrane proteins and cytoskeletal proteins. Interacts (via N-terminus) with SPTB/spectrin (beta chain). Also interacts with TTN/titin. Isoform Mu17 interacts with OBSCN isoform 3/obscurin. Interacts with HIF1AN. Interacts (via ANK 1-5 repeats) with RHCE; this interaction mediates the primary membrane attachment site for ANK1. Interacts (via ANK 1-2 repeats) with AQP1 (via the N-terminal). Interacts (via ANK 1-13 repeats) with EPB42. Interacts directly with SLC4A1 (via the cytoplasmic domain); this interaction is mediated by the SLC4A1 Band 3-II and Band 3-III dimers. In terms of processing, regulated by phosphorylation. Palmitoylated. Post-translationally, hydroxylated by HIF1AN at several asparagine and 1 aspartate residue within ANK repeat region. Hydroxylation seems to increase the conformational stability of this region and may also modulate protein-protein interactions mediated by the ANK repeat region. In terms of processing, (Microbial infection) Probably cleaved by P.falciparum SERA6; the cleavage probably causes the disruption of the actin cytoskeleton and the rupture of the erythrocyte cell membrane releasing the merozoites. As to expression, isoform Mu17, isoform Mu18, isoform Mu19 and isoform Mu20 are expressed in skeletal muscle. Isoform Br21 is expressed in brain.

It localises to the cytoplasm. Its subcellular location is the cytoskeleton. It is found in the membrane. The protein resides in the myofibril. The protein localises to the sarcomere. It localises to the m line. Its subcellular location is the sarcoplasmic reticulum. Its function is as follows. Component of the ankyrin-1 complex, a multiprotein complex involved in the stability and shape of the erythrocyte membrane. Attaches integral membrane proteins to cytoskeletal elements; binds to the erythrocyte membrane protein band 4.2, to Na-K ATPase, to the lymphocyte membrane protein GP85, and to the cytoskeletal proteins fodrin, tubulin, vimentin and desmin. Erythrocyte ankyrins also link spectrin (beta chain) to the cytoplasmic domain of the erythrocytes anion exchange protein; they retain most or all of these binding functions. Functionally, together with obscurin in skeletal muscle may provide a molecular link between the sarcoplasmic reticulum and myofibrils. The polypeptide is Ankyrin-1 (Homo sapiens (Human)).